A 193-amino-acid chain; its full sequence is Putative 3-methyladenine DNA glycosylase (193 aa).

This sequence belongs to the DNA glycosylase MPG family.

This is Putative 3-methyladenine DNA glycosylase from Francisella tularensis subsp. tularensis (strain FSC 198).